A 65-amino-acid chain; its full sequence is Kappa-scoloptoxin(04)-Ssd1a (65 aa).

Residues 1 to 24 form the signal peptide; the sequence is MKKTCVVSVFLVLLLLKFHDLSMG. Positions 25-36 are excised as a propeptide; the sequence is EEISPLKKVAPR. 2 cysteine pairs are disulfide-bonded: Cys-42–Cys-53 and Cys-47–Cys-60.

Expressed by the venom gland.

The protein resides in the secreted. In terms of biological role, voltage-gated potassium channel inhibitor. This chain is Kappa-scoloptoxin(04)-Ssd1a, found in Scolopendra dehaani (Thai centipede).